Here is a 334-residue protein sequence, read N- to C-terminus: L-lactate dehydrogenase B chain (334 aa).

At Ala2 the chain carries N-acetylalanine. N6-acetyllysine is present on Lys7. NAD(+) is bound by residues 30–58 and Arg100; that span reads GQVG…LEDK. The residue at position 44 (Ser44) is a Phosphoserine. At Lys58 the chain carries N6-acetyllysine. Arg107 contributes to the substrate binding site. Lys119 carries the post-translational modification N6-acetyllysine. Asn139 serves as a coordination point for NAD(+). Asn139 and Arg170 together coordinate substrate. Catalysis depends on His194, which acts as the Proton acceptor. The residue at position 240 (Tyr240) is a Phosphotyrosine. A substrate-binding site is contributed by Thr249. Lys329 is modified (N6-acetyllysine).

Belongs to the LDH/MDH superfamily. LDH family. In terms of assembly, homotetramer. Interacts with PTEN upstream reading frame protein MP31; the interaction leads to inhibition of mitochondrial lactate dehydrogenase activity, preventing conversion of lactate to pyruvate in mitochondria.

It localises to the cytoplasm. The protein localises to the mitochondrion inner membrane. The enzyme catalyses (S)-lactate + NAD(+) = pyruvate + NADH + H(+). Its pathway is fermentation; pyruvate fermentation to lactate; (S)-lactate from pyruvate: step 1/1. Interconverts simultaneously and stereospecifically pyruvate and lactate with concomitant interconversion of NADH and NAD(+). The polypeptide is L-lactate dehydrogenase B chain (Ldhb) (Rattus norvegicus (Rat)).